We begin with the raw amino-acid sequence, 521 residues long: GMP synthase [glutamine-hydrolyzing] (521 aa).

The 199-residue stretch at 5–203 folds into the Glutamine amidotransferase type-1 domain; sequence KILILDFGSQ…VHEICGCGRD (199 aa). Cysteine 82 functions as the Nucleophile in the catalytic mechanism. Active-site residues include histidine 177 and glutamate 179. The GMPS ATP-PPase domain maps to 204–396; sequence WNMPDYVNEA…LGLPHEMVYR (193 aa). 231–237 serves as a coordination point for ATP; sequence SGGVDSS.

Homodimer.

It carries out the reaction XMP + L-glutamine + ATP + H2O = GMP + L-glutamate + AMP + diphosphate + 2 H(+). It functions in the pathway purine metabolism; GMP biosynthesis; GMP from XMP (L-Gln route): step 1/1. Functionally, catalyzes the synthesis of GMP from XMP. The sequence is that of GMP synthase [glutamine-hydrolyzing] from Aromatoleum aromaticum (strain DSM 19018 / LMG 30748 / EbN1) (Azoarcus sp. (strain EbN1)).